The following is a 106-amino-acid chain: MSLASRRKVRIRLYGTNPADLDQVAREIVDLAKKMGVAVRGPIPLPTKRLMVTVRRAPSGQGYHTFDHWELRISKRLIDIEASERVLRRLMTIRVPDTVKIELQLI.

It belongs to the universal ribosomal protein uS10 family. Part of the 30S ribosomal subunit.

Involved in the binding of tRNA to the ribosomes. The protein is Small ribosomal subunit protein uS10 of Pyrobaculum calidifontis (strain DSM 21063 / JCM 11548 / VA1).